A 471-amino-acid chain; its full sequence is 8-amino-7-oxononanoate synthase (471 aa).

Residue R40 coordinates substrate. 131 to 132 lines the pyridoxal 5'-phosphate pocket; sequence GY. Residue H156 coordinates substrate. Pyridoxal 5'-phosphate is bound by residues S202, H230, and T258. K261 carries the N6-(pyridoxal phosphate)lysine modification. T377 provides a ligand contact to substrate. A disordered region spans residues 409-471; that stretch reads SEGQTRREAE…LGAARRETAA (63 aa).

It belongs to the class-II pyridoxal-phosphate-dependent aminotransferase family. BioF subfamily. In terms of assembly, homodimer. It depends on pyridoxal 5'-phosphate as a cofactor.

The enzyme catalyses 6-carboxyhexanoyl-[ACP] + L-alanine + H(+) = (8S)-8-amino-7-oxononanoate + holo-[ACP] + CO2. It functions in the pathway cofactor biosynthesis; biotin biosynthesis. Functionally, catalyzes the decarboxylative condensation of pimeloyl-[acyl-carrier protein] and L-alanine to produce 8-amino-7-oxononanoate (AON), [acyl-carrier protein], and carbon dioxide. This chain is 8-amino-7-oxononanoate synthase, found in Burkholderia ambifaria (strain ATCC BAA-244 / DSM 16087 / CCUG 44356 / LMG 19182 / AMMD) (Burkholderia cepacia (strain AMMD)).